The following is a 1381-amino-acid chain: DNA-directed RNA polymerase subunit beta'' (1381 aa).

Residues Cys-220, Cys-293, Cys-300, and Cys-303 each coordinate Zn(2+).

The protein belongs to the RNA polymerase beta' chain family. RpoC2 subfamily. In terms of assembly, in plastids the minimal PEP RNA polymerase catalytic core is composed of four subunits: alpha, beta, beta', and beta''. When a (nuclear-encoded) sigma factor is associated with the core the holoenzyme is formed, which can initiate transcription. The cofactor is Zn(2+).

The protein resides in the plastid. It localises to the chloroplast. It carries out the reaction RNA(n) + a ribonucleoside 5'-triphosphate = RNA(n+1) + diphosphate. In terms of biological role, DNA-dependent RNA polymerase catalyzes the transcription of DNA into RNA using the four ribonucleoside triphosphates as substrates. This Draba nemorosa (Woodland whitlowgrass) protein is DNA-directed RNA polymerase subunit beta''.